Consider the following 92-residue polypeptide: Small ribosomal subunit protein bS20 (92 aa).

The segment at 1–23 (MANTTSAKKATRKIARRTDVNKA) is disordered.

Belongs to the bacterial ribosomal protein bS20 family.

Its function is as follows. Binds directly to 16S ribosomal RNA. The sequence is that of Small ribosomal subunit protein bS20 from Rhizobium etli (strain CIAT 652).